Consider the following 351-residue polypeptide: Geranylgeranyl pyrophosphate synthase (351 aa).

Residues K55, R58, and Q93 each coordinate isopentenyl diphosphate. Mg(2+) is bound by residues D100 and D104. R109 lines the dimethylallyl diphosphate pocket. An isopentenyl diphosphate-binding site is contributed by R110. Dimethylallyl diphosphate contacts are provided by K196, T197, Q236, K253, and K262.

The protein belongs to the FPP/GGPP synthase family. Interacts with fps1. Requires Mg(2+) as cofactor.

It is found in the cytoplasm. The protein resides in the nucleus. It catalyses the reaction isopentenyl diphosphate + dimethylallyl diphosphate = (2E)-geranyl diphosphate + diphosphate. The enzyme catalyses isopentenyl diphosphate + (2E)-geranyl diphosphate = (2E,6E)-farnesyl diphosphate + diphosphate. The catalysed reaction is isopentenyl diphosphate + (2E,6E)-farnesyl diphosphate = (2E,6E,10E)-geranylgeranyl diphosphate + diphosphate. The protein operates within isoprenoid biosynthesis; farnesyl diphosphate biosynthesis; farnesyl diphosphate from geranyl diphosphate and isopentenyl diphosphate: step 1/1. It functions in the pathway isoprenoid biosynthesis; geranyl diphosphate biosynthesis; geranyl diphosphate from dimethylallyl diphosphate and isopentenyl diphosphate: step 1/1. Its pathway is isoprenoid biosynthesis; geranylgeranyl diphosphate biosynthesis; geranylgeranyl diphosphate from farnesyl diphosphate and isopentenyl diphosphate: step 1/1. In terms of biological role, catalyzes the trans-addition of the 3 molecules of IPP onto DMAPP to form geranylgeranyl pyrophosphate. Required for the membrane attachment of ypt7 and rhb1. May be involved in vesicle trafficking and protein sorting. Required for forespore membrane formation. The chain is Geranylgeranyl pyrophosphate synthase (spo9) from Schizosaccharomyces pombe (strain 972 / ATCC 24843) (Fission yeast).